A 294-amino-acid chain; its full sequence is Large ribosomal subunit protein uL18B (294 aa).

Belongs to the universal ribosomal protein uL18 family. Component of the large ribosomal subunit (LSU). Mature yeast ribosomes consist of a small (40S) and a large (60S) subunit. The 40S small subunit contains 1 molecule of ribosomal RNA (18S rRNA) and 33 different proteins (encoded by 57 genes). The large 60S subunit contains 3 rRNA molecules (25S, 5.8S and 5S rRNA) and 46 different proteins (encoded by 81 genes). Component of a hexameric 5S RNP precursor complex, composed of 5S RNA, rrs1, rpf2, rpl5a/rpl5b, rpl11a/rpl11b and syo1; this complex acts as a precursor for ribosome assembly. rpl5a/rpl5b/uL18 forms a heterotrimeric complex with syo1 and rpl11a/rpl11b/uL5. Interaction of this complex with KAP104 allows the nuclear import of the heterotrimer.

The protein localises to the cytoplasm. It is found in the nucleus. Functionally, component of the ribosome, a large ribonucleoprotein complex responsible for the synthesis of proteins in the cell. The small ribosomal subunit (SSU) binds messenger RNAs (mRNAs) and translates the encoded message by selecting cognate aminoacyl-transfer RNA (tRNA) molecules. The large subunit (LSU) contains the ribosomal catalytic site termed the peptidyl transferase center (PTC), which catalyzes the formation of peptide bonds, thereby polymerizing the amino acids delivered by tRNAs into a polypeptide chain. The nascent polypeptides leave the ribosome through a tunnel in the LSU and interact with protein factors that function in enzymatic processing, targeting, and the membrane insertion of nascent chains at the exit of the ribosomal tunnel. In Schizosaccharomyces pombe (strain 972 / ATCC 24843) (Fission yeast), this protein is Large ribosomal subunit protein uL18B (rpl502).